Reading from the N-terminus, the 485-residue chain is Aspartyl/glutamyl-tRNA(Asn/Gln) amidotransferase subunit B (485 aa).

Belongs to the GatB/GatE family. GatB subfamily. As to quaternary structure, heterotrimer of A, B and C subunits.

The catalysed reaction is L-glutamyl-tRNA(Gln) + L-glutamine + ATP + H2O = L-glutaminyl-tRNA(Gln) + L-glutamate + ADP + phosphate + H(+). It catalyses the reaction L-aspartyl-tRNA(Asn) + L-glutamine + ATP + H2O = L-asparaginyl-tRNA(Asn) + L-glutamate + ADP + phosphate + 2 H(+). In terms of biological role, allows the formation of correctly charged Asn-tRNA(Asn) or Gln-tRNA(Gln) through the transamidation of misacylated Asp-tRNA(Asn) or Glu-tRNA(Gln) in organisms which lack either or both of asparaginyl-tRNA or glutaminyl-tRNA synthetases. The reaction takes place in the presence of glutamine and ATP through an activated phospho-Asp-tRNA(Asn) or phospho-Glu-tRNA(Gln). This Cupriavidus taiwanensis (strain DSM 17343 / BCRC 17206 / CCUG 44338 / CIP 107171 / LMG 19424 / R1) (Ralstonia taiwanensis (strain LMG 19424)) protein is Aspartyl/glutamyl-tRNA(Asn/Gln) amidotransferase subunit B.